Consider the following 314-residue polypeptide: MADENYTRITEFIFIGLRYHPNLQVFLFLLFLLFYLVTMTGNLGMIILIRVDSRLHTPMYFFLSHLSFVDICFSSVVAPKMLTDFFADKKAISFLGCVLQQWFFGFFVAIECLLLASMAYDRYVAICNPLLYSVAMSQRLCIQLVIGPYAVGFFNTMTHTTAAFRLPFCGSNIINHFFCDMSPILSLICADIRINKLLVFIVAGAVLIVSSTTIIVSYFHILIAILRIRSAEGRRKAFSTCSSHVTAVSILYGTLFFIYVRPSAISSLDLNKVVSVFYTAVIPMLNPLIYSLRNKEVKSAMGRTVAKAKVFLKN.

Residues 1 to 25 are Extracellular-facing; sequence MADENYTRITEFIFIGLRYHPNLQV. Residue Asn-5 is glycosylated (N-linked (GlcNAc...) asparagine). A helical membrane pass occupies residues 26 to 46; it reads FLFLLFLLFYLVTMTGNLGMI. Residues 47–54 lie on the Cytoplasmic side of the membrane; sequence ILIRVDSR. A helical membrane pass occupies residues 55-75; the sequence is LHTPMYFFLSHLSFVDICFSS. Over 76–99 the chain is Extracellular; that stretch reads VVAPKMLTDFFADKKAISFLGCVL. Cys-97 and Cys-189 are oxidised to a cystine. A helical membrane pass occupies residues 100-120; it reads QQWFFGFFVAIECLLLASMAY. Residues 121-133 lie on the Cytoplasmic side of the membrane; that stretch reads DRYVAICNPLLYS. The helical transmembrane segment at 134–154 threads the bilayer; the sequence is VAMSQRLCIQLVIGPYAVGFF. The Extracellular segment spans residues 155 to 196; it reads NTMTHTTAAFRLPFCGSNIINHFFCDMSPILSLICADIRINK. Residues 197-217 traverse the membrane as a helical segment; the sequence is LLVFIVAGAVLIVSSTTIIVS. Topologically, residues 218–237 are cytoplasmic; sequence YFHILIAILRIRSAEGRRKA. A helical transmembrane segment spans residues 238 to 258; it reads FSTCSSHVTAVSILYGTLFFI. Residues 259 to 271 lie on the Extracellular side of the membrane; sequence YVRPSAISSLDLN. A helical membrane pass occupies residues 272 to 292; sequence KVVSVFYTAVIPMLNPLIYSL. The Cytoplasmic segment spans residues 293–314; sequence RNKEVKSAMGRTVAKAKVFLKN.

Belongs to the G-protein coupled receptor 1 family.

The protein localises to the cell membrane. Its function is as follows. Potential odorant receptor. The sequence is that of Olfactory receptor 5G9 from Mus musculus (Mouse).